Reading from the N-terminus, the 353-residue chain is ATP-dependent kinase YFH7 (353 aa).

Residue 31–39 coordinates ATP; sequence GSPGSGKST.

Belongs to the YFH7 family.

In terms of biological role, ATP-dependent kinase that could be involved in endoplasmic reticulum membrane assembly. In Saccharomyces cerevisiae (strain JAY291) (Baker's yeast), this protein is ATP-dependent kinase YFH7 (YFH7).